Consider the following 38-residue polypeptide: Humanin-like protein (38 aa).

In terms of tissue distribution, in the testis, expressed in Leydig cells at 10, 20 and 60 days of age (at protein level). Also expressed in pachytene spermatocytes at day 20 and in vessels, peritubular cells and spermatids at day 60. Not detected in Sertoli cells (at protein level). In the adult ovary, expressed in stromal cells, granulosa cells, theca cells and oocytes at diestrus and proestrus (at protein level). Expressed in the anterior pituitary where it is detected in lactotropes and somatotropes with lower levels in females than males (at protein level). In the hippocampus, expressed in astrocytes but not in neurons or oligodendrocytes (at protein level). Expressed in muscle, liver and hypothalamus but not in epididymal fat (at protein level). Widely expressed with highest levels in cardiac and skeletal muscle and lowest levels in lung, testis and uterus. In the CNS, levels are relatively high in the cerebellum and cortex and low in the hippocampus. In the hippocampus, lower levels are detected in ovariectomized animals than in controls.

The protein localises to the mitochondrion. It localises to the secreted. It is found in the cytoplasm. Plays a role as a neuroprotective factor. Protects against neuronal cell death induced by amyloid-beta peptides. Also protects against excitotoxic cell death. Prevents amyloid-beta peptide-induced spatial learning and memory impairments, protects against amyloid-beta peptide-induced suppression of hippocampal long-term potentiation, and inhibits amyloid-beta peptide-induced activation of STAT3 and inhibition of CASP3. Prevents glutamate-induced dendritic atrophy in hippocampal neurons and also prevents glutamate-induced decrease in SYP puncta number and total puncta area. Protects anterior pituitary cells from TNF-induced apoptosis. Plays a role in ovarian follicle development by acting as a cryoprotective factor for granulosa cells in the antral follicle. Increases androgen production in Leydig cells and promotes Leydig cell survival by preventing apoptosis. The chain is Humanin-like protein from Rattus norvegicus (Rat).